We begin with the raw amino-acid sequence, 602 residues long: Aryl hydrocarbon receptor protein 1 (602 aa).

A propeptide spanning residues 1-2 is cleaved from the precursor; the sequence is MY. The span at 1-12 shows a compositional bias: basic residues; sequence MYASKRRQRNFK. A disordered region spans residues 1–28; sequence MYASKRRQRNFKRVRDPPKQLTNTNPSK. 2 consecutive short sequence motifs (nuclear localization signal) follow at residues 5-8 and 28-33; these read KRRQ and KRHRER. The region spanning 18 to 71 is the bHLH domain; that stretch reads PKQLTNTNPSKRHRERLNGELETVAMLLPYDSSTISRLDKLSVLRLAVSFLQCK. Required for maintaining the overall integrity of the AHR:ARNT heterodimer and its transcriptional activity regions lie at residues 41–73, 133–141, and 266–268; these read VAML…CKAH, SLKSLGGFI, and ICV. Residues 55-63 carry the Nuclear export signal motif; sequence LDKLSVLRL. The PAS domain maps to 126-196; sequence ESNFEEISLK…QQLDSNFHIP (71 aa). Residues 440–467 are disordered; sequence STSNSLFPSVPVPTPTTTKANRRRKENS.

Interacts with daf-21/hsp90. Interacts with aha-1. As to expression, expressed in many distinct neuronal cells including RMED, RMEV, RMEL and RMER. Functions in URX neurons to promote aggregation behavior.

It is found in the nucleus. Its function is as follows. Probable ligand-activated transcriptional activator. Acts as a transcriptional regulator in GABAergic motor neuron cell fate specification and development. Promotes cell-type-specific expression of guanylate cyclase genes that have key roles in aggregation behavior and hyperoxia avoidance. Has no role in carbon dioxide avoidance. This chain is Aryl hydrocarbon receptor protein 1, found in Caenorhabditis elegans.